The primary structure comprises 339 residues: Biotin synthase (339 aa).

Residues 47–276 enclose the Radical SAM core domain; sequence FYGKKVKLNM…SKEIRISGGR (230 aa). The [4Fe-4S] cluster site is built by Cys65, Cys69, and Cys72. Residues Cys109, Cys141, Cys201, and Arg271 each contribute to the [2Fe-2S] cluster site.

It belongs to the radical SAM superfamily. Biotin synthase family. In terms of assembly, homodimer. [4Fe-4S] cluster is required as a cofactor. It depends on [2Fe-2S] cluster as a cofactor.

It carries out the reaction (4R,5S)-dethiobiotin + (sulfur carrier)-SH + 2 reduced [2Fe-2S]-[ferredoxin] + 2 S-adenosyl-L-methionine = (sulfur carrier)-H + biotin + 2 5'-deoxyadenosine + 2 L-methionine + 2 oxidized [2Fe-2S]-[ferredoxin]. The protein operates within cofactor biosynthesis; biotin biosynthesis; biotin from 7,8-diaminononanoate: step 2/2. Functionally, catalyzes the conversion of dethiobiotin (DTB) to biotin by the insertion of a sulfur atom into dethiobiotin via a radical-based mechanism. This Bacillus velezensis (strain DSM 23117 / BGSC 10A6 / LMG 26770 / FZB42) (Bacillus amyloliquefaciens subsp. plantarum) protein is Biotin synthase.